The chain runs to 341 residues: GTPase Obg (341 aa).

Residues 2–160 (SGFIDEVPIQ…FSLILELKLL (159 aa)) enclose the Obg domain. Positions 161 to 330 (ADIGIVGLPN…LLERIDKVFF (170 aa)) constitute an OBG-type G domain. GTP is bound by residues 167–174 (GLPNAGKS), 192–196 (FTTLS), 215–218 (DIPG), 282–285 (NKMD), and 311–313 (SAD). 2 residues coordinate Mg(2+): Ser-174 and Thr-194.

It belongs to the TRAFAC class OBG-HflX-like GTPase superfamily. OBG GTPase family. As to quaternary structure, monomer. Requires Mg(2+) as cofactor.

It is found in the cytoplasm. Its function is as follows. An essential GTPase which binds GTP, GDP and possibly (p)ppGpp with moderate affinity, with high nucleotide exchange rates and a fairly low GTP hydrolysis rate. Plays a role in control of the cell cycle, stress response, ribosome biogenesis and in those bacteria that undergo differentiation, in morphogenesis control. The chain is GTPase Obg from Leptospira biflexa serovar Patoc (strain Patoc 1 / Ames).